Consider the following 137-residue polypeptide: Putative pre-16S rRNA nuclease (137 aa).

Belongs to the YqgF nuclease family.

The protein localises to the cytoplasm. Functionally, could be a nuclease involved in processing of the 5'-end of pre-16S rRNA. The protein is Putative pre-16S rRNA nuclease of Bacillus cereus (strain B4264).